The primary structure comprises 137 residues: Large-conductance mechanosensitive channel (137 aa).

Transmembrane regions (helical) follow at residues 9-29 and 79-99; these read AFAV…GAAF and IQTV…VKAI.

This sequence belongs to the MscL family. Homopentamer.

It localises to the cell inner membrane. Its function is as follows. Channel that opens in response to stretch forces in the membrane lipid bilayer. May participate in the regulation of osmotic pressure changes within the cell. The polypeptide is Large-conductance mechanosensitive channel (Pseudomonas aeruginosa (strain ATCC 15692 / DSM 22644 / CIP 104116 / JCM 14847 / LMG 12228 / 1C / PRS 101 / PAO1)).